A 218-amino-acid polypeptide reads, in one-letter code: NADH-ubiquinone oxidoreductase 21 kDa subunit, mitochondrial (218 aa).

The transit peptide at 1–33 (MSALRITTASAARMLRTSNAMMPSVMGAAQRRA) directs the protein to the mitochondrion. The interval 31–74 (RRALSDSAEPARVPSVESARVPEKLAKEDSPLATPKRNSPDYNV) is disordered. The segment covering 50–60 (RVPEKLAKEDS) has biased composition (basic and acidic residues).

It belongs to the complex I NDUFS4 subunit family. In terms of assembly, complex I is composed of about 40 different subunits. This is a component of the iron-sulfur (IP) fragment of the enzyme.

Its subcellular location is the mitochondrion inner membrane. In terms of biological role, accessory subunit of the mitochondrial membrane respiratory chain NADH dehydrogenase (Complex I), that is believed not to be involved in catalysis. Complex I functions in the transfer of electrons from NADH to the respiratory chain. The immediate electron acceptor for the enzyme is believed to be ubiquinone. The chain is NADH-ubiquinone oxidoreductase 21 kDa subunit, mitochondrial (nuo-21) from Neurospora crassa (strain ATCC 24698 / 74-OR23-1A / CBS 708.71 / DSM 1257 / FGSC 987).